A 162-amino-acid chain; its full sequence is HTH-type transcriptional regulator IscR (162 aa).

In terms of domain architecture, HTH rrf2-type spans 2–131; the sequence is RLTSKGRYAV…NNITLGELVN (130 aa). The H-T-H motif DNA-binding region spans 28–51; sequence LADISERQGISLSYLEQLFSRLRK. Residues Cys-92, Cys-98, and Cys-104 each contribute to the [2Fe-2S] cluster site.

[2Fe-2S] cluster is required as a cofactor.

Regulates the transcription of several operons and genes involved in the biogenesis of Fe-S clusters and Fe-S-containing proteins. This Shigella sonnei (strain Ss046) protein is HTH-type transcriptional regulator IscR.